The following is a 406-amino-acid chain: RING finger protein PSH1 (406 aa).

An RING-type zinc finger spans residues 30–72 (CSICHDYMFVPMMTPCGHNYCYGCLNTWFASNTQKELACPQCR). Phosphoserine is present on residues S143 and S191. The tract at residues 209 to 406 (RFASTNPFAN…RVVLGDSDDE (198 aa)) is disordered. 3 stretches are compositionally biased toward acidic residues: residues 223 to 232 (SSEDDDSSEE), 256 to 274 (AVDD…EEMD), and 281 to 291 (IEDDEDDEDED). Phosphothreonine is present on T310. S403 carries the post-translational modification Phosphoserine.

As to quaternary structure, interacts with POB3 and SPT16.

Its subcellular location is the nucleus. The polypeptide is RING finger protein PSH1 (PSH1) (Saccharomyces cerevisiae (strain ATCC 204508 / S288c) (Baker's yeast)).